The sequence spans 78 residues: Small integral membrane protein 1 (78 aa).

An N-acetylmethionine modification is found at Met1. Over residues 1–18 (MQPQESHVHYSRWEDGSR) the composition is skewed to basic and acidic residues. Residues 1–20 (MQPQESHVHYSRWEDGSRDG) are disordered. Over 1–46 (MQPQESHVHYSRWEDGSRDGVSLGAVSSTEEASRCRRISQRLCTGK) the chain is Cytoplasmic. Phosphoserine occurs at positions 6, 17, 22, and 27. A helical; Signal-anchor for type II membrane protein membrane pass occupies residues 47 to 67 (LGIAMKVLGGVALFWIIFILG). Over 68 to 78 (YLTGYYVHKCK) the chain is Extracellular. Residues 68–78 (YLTGYYVHKCK) form a displays the Vel antigen region.

It belongs to the SMIM1 family. Homooligomer; disulfide-linked. Highly expressed in the bone marrow and expressed at lower levels in non-hematopoietic tissues. Highly expressed in erythroleukemia cell lines. Up-regulated in CD34+ hematopoietic progenitors cultured toward red blood cells.

The protein localises to the cell membrane. In terms of biological role, regulator of red blood cell formation. The protein is Small integral membrane protein 1 of Homo sapiens (Human).